The sequence spans 456 residues: tRNA-2-methylthio-N(6)-dimethylallyladenosine synthase (456 aa).

Positions 6 to 125 (KRLFIKTYGC…LPELIAQAHR (120 aa)) constitute an MTTase N-terminal domain. The [4Fe-4S] cluster site is built by Cys15, Cys51, Cys88, Cys163, Cys167, and Cys170. One can recognise a Radical SAM core domain in the interval 149-385 (QVEGYSAFVT…QELLSDQQAA (237 aa)). The 63-residue stretch at 388–450 (ESMIGRTLPV…RNSLSGSLTG (63 aa)) folds into the TRAM domain.

The protein belongs to the methylthiotransferase family. MiaB subfamily. In terms of assembly, monomer. [4Fe-4S] cluster serves as cofactor.

It is found in the cytoplasm. The enzyme catalyses N(6)-dimethylallyladenosine(37) in tRNA + (sulfur carrier)-SH + AH2 + 2 S-adenosyl-L-methionine = 2-methylsulfanyl-N(6)-dimethylallyladenosine(37) in tRNA + (sulfur carrier)-H + 5'-deoxyadenosine + L-methionine + A + S-adenosyl-L-homocysteine + 2 H(+). Its function is as follows. Catalyzes the methylthiolation of N6-(dimethylallyl)adenosine (i(6)A), leading to the formation of 2-methylthio-N6-(dimethylallyl)adenosine (ms(2)i(6)A) at position 37 in tRNAs that read codons beginning with uridine. This chain is tRNA-2-methylthio-N(6)-dimethylallyladenosine synthase, found in Maricaulis maris (strain MCS10) (Caulobacter maris).